The chain runs to 72 residues: Translation initiation factor IF-1 (72 aa).

Residues 1 to 72 (MAKEDSIEMQ…TKGRIIFRAR (72 aa)) enclose the S1-like domain.

The protein belongs to the IF-1 family. As to quaternary structure, component of the 30S ribosomal translation pre-initiation complex which assembles on the 30S ribosome in the order IF-2 and IF-3, IF-1 and N-formylmethionyl-tRNA(fMet); mRNA recruitment can occur at any time during PIC assembly.

It is found in the cytoplasm. In terms of biological role, one of the essential components for the initiation of protein synthesis. Stabilizes the binding of IF-2 and IF-3 on the 30S subunit to which N-formylmethionyl-tRNA(fMet) subsequently binds. Helps modulate mRNA selection, yielding the 30S pre-initiation complex (PIC). Upon addition of the 50S ribosomal subunit IF-1, IF-2 and IF-3 are released leaving the mature 70S translation initiation complex. The protein is Translation initiation factor IF-1 of Actinobacillus succinogenes (strain ATCC 55618 / DSM 22257 / CCUG 43843 / 130Z).